The sequence spans 101 residues: UPF0213 protein VC0395_0675/VC395_A0575 (101 aa).

The region spanning 9-85 is the GIY-YIG domain; that stretch reads SPWFVYLVRC…KALSKSQKEA (77 aa).

This sequence belongs to the UPF0213 family.

In Vibrio cholerae serotype O1 (strain ATCC 39541 / Classical Ogawa 395 / O395), this protein is UPF0213 protein VC0395_0675/VC395_A0575.